A 1866-amino-acid chain; its full sequence is RNA1 polyprotein (1866 aa).

The region spanning 462 to 633 (LKGINDLEQL…KAYDAANFAS (172 aa)) is the SF3 helicase domain. 494–501 (GKSRTGKS) contacts ATP. A helical transmembrane segment spans residues 897 to 917 (LVGSGNGPVLMGVAAGAFSAE). Ser920 carries the O-(5'-phospho-RNA)-serine modification. Residues 945–1150 (DAQMSLDQSS…CASLLPPLEP (206 aa)) enclose the Peptidase C3 domain. Residues His987, Glu1023, and Cys1113 each act as for picornain 3C-like protease activity in the active site. The RdRp catalytic domain maps to 1429–1559 (NDVLCCDYSS…SVNAVVTPYF (131 aa)).

Specific enzymatic cleavages by picornain 3C-like protease in vivo yield mature proteins. Picornain 3C-like protease is autocatalytically processed. In terms of processing, uridylylated by the polymerase and is covalently linked to the 5'-end of genomic RNA. This uridylylated form acts as a nucleotide-peptide primer for the polymerase.

The protein localises to the host membrane. It is found in the host cytoplasm. Its subcellular location is the host perinuclear region. The protein resides in the host endoplasmic reticulum. The catalysed reaction is RNA(n) + a ribonucleoside 5'-triphosphate = RNA(n+1) + diphosphate. Thiol protease that cleaves the RNA1 and RNA2 polyproteins. In terms of biological role, plays a role in RNA replication. It is covalently linked to the 5'terminus of both viral single-stranded RNA1 and RNA2 molecules. Functionally, down-regulates the RNA1 polyprotein processing and enhances trans-cleavage of RNA2 polyproteins. The protease cofactor and the putative helicase seem to target the replication complexes to ER membranes. Their physical association causes the membrane rearrangement of host ER that may result in formation of the small membranous vesicles that are the site of viral RNA synthesis. Its function is as follows. The protease cofactor and the putative helicase seem to target the replication complexes to ER membranes. Their physical association causes the membrane rearrangement of host ER that may result in formation of the small membranous vesicles that are the site of viral RNA synthesis. Replicates the viral genome. In Cajanus cajan (Pigeon pea), this protein is RNA1 polyprotein.